The sequence spans 190 residues: Xanthine phosphoribosyltransferase (190 aa).

Xanthine is bound by residues Leu-20 and Asn-27. 128–132 (ANGKA) provides a ligand contact to 5-phospho-alpha-D-ribose 1-diphosphate. Lys-156 contacts xanthine.

It belongs to the purine/pyrimidine phosphoribosyltransferase family. Xpt subfamily. In terms of assembly, homodimer.

It is found in the cytoplasm. It catalyses the reaction XMP + diphosphate = xanthine + 5-phospho-alpha-D-ribose 1-diphosphate. Its pathway is purine metabolism; XMP biosynthesis via salvage pathway; XMP from xanthine: step 1/1. Its function is as follows. Converts the preformed base xanthine, a product of nucleic acid breakdown, to xanthosine 5'-monophosphate (XMP), so it can be reused for RNA or DNA synthesis. The protein is Xanthine phosphoribosyltransferase of Pseudomonas entomophila (strain L48).